The chain runs to 393 residues: Iripin-5 (393 aa).

An N-terminal signal peptide occupies residues 1–16; it reads MKTLIVLMCSLVVVWA. 2 N-linked (GlcNAc...) asparagine glycosylation sites follow: asparagine 198 and asparagine 245.

It belongs to the serpin family. As to expression, highly expressed in female salivary gland during blood feeding. Expressed in female midgut and ovary during blood feeding.

It localises to the secreted. Serine protease inhibitor that modulates blood feeding of ticks on vertebrate species. Inhibits host neutrophil elastase (ELANE) and proteinase 3/myeloblastin (PRTN3). Moderately inhibits host chymase, cathepsin G (CTSG), trypsin and alpha-chymotrypsin. Decreases host neutrophil migration. Decreases nitric oxide production by host macrophages. Decreases host complement activity. The chain is Iripin-5 from Ixodes ricinus (Common tick).